The following is a 79-amino-acid chain: Conotoxin TxMEKL-021 (79 aa).

An N-terminal signal peptide occupies residues 1–19 (MEKLTILLLVAVVLMSTQA). The propeptide occupies 20–47 (LPQGGGEKRPRENIRFLSKRKSNAERWR). 3 cysteine pairs are disulfide-bonded: cysteine 51–cysteine 65, cysteine 58–cysteine 69, and cysteine 64–cysteine 75.

Belongs to the conotoxin O2 superfamily. In terms of tissue distribution, expressed by the venom duct.

Its subcellular location is the secreted. In Conus textile (Cloth-of-gold cone), this protein is Conotoxin TxMEKL-021.